Here is a 211-residue protein sequence, read N- to C-terminus: DELTA-stichotoxin-Hmg2a (211 aa).

The signal sequence occupies residues 1 to 19 (MNRLIVLFLIVTMICATIA). Positions 20 to 34 (VPSREELEDQKEYKR) are excised as a propeptide. The interval 37–46 (ALAGTIIEGA) is plays an important role in the hemolytic activity. The interval 45-64 (GASLGFQILDKVLGELGKVS) is N-terminal region. Positions 88, 121, 139, 141, 167, 171, and 172 each coordinate phosphocholine. The tract at residues 139–154 (SVPFDYNFYSNWWDVK) is trp-rich region, which is important for the binding to lipid membrane. Residues 177–179 (RGD) carry the Cell attachment site, crucial for protein stability motif.

It belongs to the actinoporin family. Sea anemone subfamily. Octamer or nonamer in membranes. Monomer in the soluble state.

The protein resides in the secreted. Its subcellular location is the nematocyst. It localises to the target cell membrane. Its function is as follows. Pore-forming protein that forms cations-selective hydrophilic pores of around 1 nm and causes cardiac stimulation and cytolysis. Pore formation is a multi-step process that involves specific recognition of membrane sphingomyelin (but neither cholesterol nor phosphatidylcholine) using aromatic rich region and adjacent phosphocholine (POC) binding site, firm binding to the membrane (mainly driven by hydrophobic interactions) accompanied by the transfer of the N-terminal region to the lipid-water interface and finally pore formation after oligomerization of monomers. The sequence is that of DELTA-stichotoxin-Hmg2a from Heteractis magnifica (Magnificent sea anemone).